The following is a 154-amino-acid chain: Crossover junction endodeoxyribonuclease RuvC (154 aa).

Residues aspartate 7, glutamate 67, and aspartate 139 contribute to the active site. Aspartate 7, glutamate 67, and aspartate 139 together coordinate Mg(2+).

It belongs to the RuvC family. Homodimer which binds Holliday junction (HJ) DNA. The HJ becomes 2-fold symmetrical on binding to RuvC with unstacked arms; it has a different conformation from HJ DNA in complex with RuvA. In the full resolvosome a probable DNA-RuvA(4)-RuvB(12)-RuvC(2) complex forms which resolves the HJ. It depends on Mg(2+) as a cofactor.

The protein resides in the cytoplasm. The enzyme catalyses Endonucleolytic cleavage at a junction such as a reciprocal single-stranded crossover between two homologous DNA duplexes (Holliday junction).. In terms of biological role, the RuvA-RuvB-RuvC complex processes Holliday junction (HJ) DNA during genetic recombination and DNA repair. Endonuclease that resolves HJ intermediates. Cleaves cruciform DNA by making single-stranded nicks across the HJ at symmetrical positions within the homologous arms, yielding a 5'-phosphate and a 3'-hydroxyl group; requires a central core of homology in the junction. The consensus cleavage sequence is 5'-(A/T)TT(C/G)-3'. Cleavage occurs on the 3'-side of the TT dinucleotide at the point of strand exchange. HJ branch migration catalyzed by RuvA-RuvB allows RuvC to scan DNA until it finds its consensus sequence, where it cleaves and resolves the cruciform DNA. In Synechococcus sp. (strain CC9902), this protein is Crossover junction endodeoxyribonuclease RuvC.